A 317-amino-acid polypeptide reads, in one-letter code: Aspartate carbamoyltransferase catalytic subunit (317 aa).

Carbamoyl phosphate-binding residues include R66 and T67. K94 provides a ligand contact to L-aspartate. Carbamoyl phosphate is bound by residues R116, H144, and Q147. R177 and R231 together coordinate L-aspartate. The carbamoyl phosphate site is built by G272 and P273.

It belongs to the aspartate/ornithine carbamoyltransferase superfamily. ATCase family. In terms of assembly, heterododecamer (2C3:3R2) of six catalytic PyrB chains organized as two trimers (C3), and six regulatory PyrI chains organized as three dimers (R2).

It carries out the reaction carbamoyl phosphate + L-aspartate = N-carbamoyl-L-aspartate + phosphate + H(+). It functions in the pathway pyrimidine metabolism; UMP biosynthesis via de novo pathway; (S)-dihydroorotate from bicarbonate: step 2/3. Its function is as follows. Catalyzes the condensation of carbamoyl phosphate and aspartate to form carbamoyl aspartate and inorganic phosphate, the committed step in the de novo pyrimidine nucleotide biosynthesis pathway. The chain is Aspartate carbamoyltransferase catalytic subunit from Rhodopseudomonas palustris (strain BisB5).